Here is a 508-residue protein sequence, read N- to C-terminus: Transcription termination factor MTERF4, chloroplastic (508 aa).

Residues 1–79 (MMKSLFLFSA…PSLLDMERGR (79 aa)) constitute a chloroplast transit peptide. Positions 28 to 49 (RLTASASTSASSPPRAGCSRGP) are enriched in low complexity. Disordered regions lie at residues 28–69 (RLTA…LYAR) and 475–508 (FDTN…EFIE). The segment covering 484 to 508 (VEDEVEDEDLDEDSDYDSTDDEFIE) has biased composition (acidic residues).

The protein belongs to the mTERF family.

The protein resides in the plastid. It is found in the chloroplast stroma. Functionally, transcription termination factor required for processing and steady-state levels of plastid transcripts. Required for splicing of the chloroplastic group II intron. Required for the accumulation of 16S and 23S ribosomes. The sequence is that of Transcription termination factor MTERF4, chloroplastic from Oryza sativa subsp. japonica (Rice).